The sequence spans 314 residues: Ribosomal protein uL3 glutamine methyltransferase (314 aa).

It belongs to the protein N5-glutamine methyltransferase family. PrmB subfamily.

It catalyses the reaction L-glutaminyl-[ribosomal protein uL3] + S-adenosyl-L-methionine = N(5)-methyl-L-glutaminyl-[ribosomal protein uL3] + S-adenosyl-L-homocysteine + H(+). In terms of biological role, methylates large ribosomal subunit protein uL3 on a specific glutamine residue. This Vibrio cholerae serotype O1 (strain ATCC 39315 / El Tor Inaba N16961) protein is Ribosomal protein uL3 glutamine methyltransferase.